Reading from the N-terminus, the 316-residue chain is Leucine-rich repeat-containing protein 73 (316 aa).

7 LRR repeats span residues 57-78, 86-106, 114-137, 145-166, 174-187, 202-223, and 231-250; these read SLAQLNLNLGVVSSPSRIKQLA, SIQSLFLHGSPLTDAGLALLN, ALVALDLGDCMLGDEAINLICGLL, GLKELTLSANPGITPKGWSRLA, QVRVLNLDYNPLGD, TLEVLDLEGTGLTNQSAQTLLD, and ALRSLVLAENSISPELQQQI. The interval 257–296 is disordered; that stretch reads GEEEEEVAGGAGDTQEWERGREPAAHQRGSSSWMCPSDPS. The segment covering 272–281 has biased composition (basic and acidic residues); it reads EWERGREPAA. Residues 286–296 are compositionally biased toward low complexity; that stretch reads SSSWMCPSDPS.

The chain is Leucine-rich repeat-containing protein 73 (LRRC73) from Homo sapiens (Human).